The primary structure comprises 66 residues: Small ribosomal subunit protein bS21A (66 aa).

The span at 34–46 (KHYEKPSVKKKRK) shows a compositional bias: basic residues. The tract at residues 34-66 (KHYEKPSVKKKRKQMEAERKRRKAQRFRKPDRD) is disordered.

The protein belongs to the bacterial ribosomal protein bS21 family.

This chain is Small ribosomal subunit protein bS21A, found in Geobacter sulfurreducens (strain ATCC 51573 / DSM 12127 / PCA).